Reading from the N-terminus, the 93-residue chain is NADH-dependent phenylglyoxylate dehydrogenase subunit delta (93 aa).

4Fe-4S ferredoxin-type domains follow at residues Met39–Ala68 and His66–Arg93.

Dimer of heteropentamers composed of an alpha (PadG), a beta (PadI), a gamma (PadE), a delta (PadF) and an epsilon (PadH) subunit. It depends on [4Fe-4S] cluster as a cofactor.

It carries out the reaction phenylglyoxylate + NAD(+) + CoA = benzoyl-CoA + CO2 + NADH. With respect to regulation, activated by magnesium ions and thiamine diphosphate. Its function is as follows. Involved in the anaerobic metabolism of phenylalanine and phenylacetate. Catalyzes the oxidative decarboxylation of phenylglyoxylate to benzoyl-CoA and CO(2). It can also react slowly with 2-oxo-3-methylbutanoate and use different electron acceptors such as benzyl viologen, methyl viologen, FAD or FMN, but NAD seems to be the physiological electron acceptor. Also catalyzes an isotope exchange between CO(2) and the carboxyl group which proves partial or complete reversibility of the oxidative decarboxylation reaction. In Aromatoleum evansii (Azoarcus evansii), this protein is NADH-dependent phenylglyoxylate dehydrogenase subunit delta (padF).